The chain runs to 465 residues: UDP-N-acetylmuramate--L-alanine ligase (465 aa).

112–118 (GTHGKTT) is an ATP binding site.

It belongs to the MurCDEF family.

Its subcellular location is the cytoplasm. The catalysed reaction is UDP-N-acetyl-alpha-D-muramate + L-alanine + ATP = UDP-N-acetyl-alpha-D-muramoyl-L-alanine + ADP + phosphate + H(+). It functions in the pathway cell wall biogenesis; peptidoglycan biosynthesis. Functionally, cell wall formation. This Burkholderia cenocepacia (strain ATCC BAA-245 / DSM 16553 / LMG 16656 / NCTC 13227 / J2315 / CF5610) (Burkholderia cepacia (strain J2315)) protein is UDP-N-acetylmuramate--L-alanine ligase.